The primary structure comprises 246 residues: uncharacterized protein (246 aa).

This is an uncharacterized protein from Acanthamoeba polyphaga (Amoeba).